Reading from the N-terminus, the 1226-residue chain is DNA-directed RNA polymerase subunit beta (1226 aa).

It belongs to the RNA polymerase beta chain family. As to quaternary structure, the RNAP catalytic core consists of 2 alpha, 1 beta, 1 beta' and 1 omega subunit. When a sigma factor is associated with the core the holoenzyme is formed, which can initiate transcription.

The catalysed reaction is RNA(n) + a ribonucleoside 5'-triphosphate = RNA(n+1) + diphosphate. Functionally, DNA-dependent RNA polymerase catalyzes the transcription of DNA into RNA using the four ribonucleoside triphosphates as substrates. The sequence is that of DNA-directed RNA polymerase subunit beta from Leptospira borgpetersenii serovar Hardjo-bovis (strain JB197).